The primary structure comprises 165 residues: Ubiquitin-like protein ISG15 (165 aa).

Ubiquitin-like domains are found at residues 2 to 78 and 79 to 157; these read GWDL…VDKC and DEPL…LRGG. Cysteine 78 carries the post-translational modification S-nitrosocysteine; alternate. Residues 152-157 carry the LRLRGG motif; the sequence is LRLRGG. The tract at residues 153-157 is involved in the ligation of specific target proteins; the sequence is RLRGG. Residue glycine 157 forms a Glycyl lysine isopeptide (Gly-Lys) (interchain with K-? in acceptor proteins) linkage. Positions 158–165 are cleaved as a propeptide — removed in mature form; it reads GTEPGGRS.

As to quaternary structure, homodimer; disulfide-linked. Interacts with, and is conjugated to its targets by UBE1L (E1 enzyme) and UBE2E2 (E2 enzyme). Interacts with NEDD4. Interacts with PARP12; this interaction inhibits PINK1/Parkin-dependent mitophagy. (Microbial infection) Interacts with vaccinia virus protein E3. In terms of assembly, (Microbial infection) Interaction with influenza B NS1 protein inhibits its conjugation. As to quaternary structure, (Microbial infection) Interacts (via C-terminus) with Crimean-Congo hemorrhagic fever virus (CCHFV) RNA-directed RNA polymerase L (via N-terminus); the deISGylase activity of the viral protein interferes with antiviral signaling pathways mediated by NF-kappaB and IRF signalings. (Microbial infection) Interacts with human cytomegalovirus protein UL26; this interaction inhibits global protein ISGylation. Post-translationally, S-nitrosylation decreases its dimerization, thereby increasing the availability as well as the solubility of monomeric ISG15 for its conjugation to cellular proteins. Induced as an inactive, precursor protein that is cleaved by specific proteases to expose the C-terminal diglycine (LRLRGG) motif. This motif is essential not only for its conjugation to substrates but also for its recognition by the relevant processing proteases. In terms of tissue distribution, detected in lymphoid cells, striated and smooth muscle, several epithelia and neurons. Expressed in neutrophils, monocytes and lymphocytes. Enhanced expression seen in pancreatic adenocarcinoma, endometrial cancer, and bladder cancer, as compared to non-cancerous tissue. In bladder cancer, the increase in expression exhibits a striking positive correlation with more advanced stages of the disease.

The protein localises to the cytoplasm. The protein resides in the secreted. Ubiquitin-like protein which plays a key role in the innate immune response to viral infection either via its conjugation to a target protein (ISGylation) or via its action as a free or unconjugated protein. ISGylation involves a cascade of enzymatic reactions involving E1, E2, and E3 enzymes which catalyze the conjugation of ISG15 to a lysine residue in the target protein. Its target proteins include IFIT1, MX1/MxA, PPM1B, UBE2L6, UBA7, CHMP5, CHMP2A, CHMP4B and CHMP6. Isgylation of the viral sensor IFIH1/MDA5 promotes IFIH1/MDA5 oligomerization and triggers activation of innate immunity against a range of viruses, including coronaviruses, flaviviruses and picornaviruses. Can also isgylate: EIF2AK2/PKR which results in its activation, RIGI which inhibits its function in antiviral signaling response, EIF4E2 which enhances its cap structure-binding activity and translation-inhibition activity, UBE2N and UBE2E1 which negatively regulates their activity, IRF3 which inhibits its ubiquitination and degradation and FLNB which prevents its ability to interact with the upstream activators of the JNK cascade thereby inhibiting IFNA-induced JNK signaling. Exhibits antiviral activity towards both DNA and RNA viruses, including influenza A, HIV-1 and Ebola virus. Restricts HIV-1 and ebola virus via disruption of viral budding. Inhibits the ubiquitination of HIV-1 Gag and host TSG101 and disrupts their interaction, thereby preventing assembly and release of virions from infected cells. Inhibits Ebola virus budding mediated by the VP40 protein by disrupting ubiquitin ligase activity of NEDD4 and its ability to ubiquitinate VP40. ISGylates influenza A virus NS1 protein which causes a loss of function of the protein and the inhibition of virus replication. The secreted form of ISG15 can: induce natural killer cell proliferation, act as a chemotactic factor for neutrophils and act as a IFN-gamma-inducing cytokine playing an essential role in antimycobacterial immunity. The secreted form acts through the integrin ITGAL/ITGB2 receptor to initiate activation of SRC family tyrosine kinases including LYN, HCK and FGR which leads to secretion of IFNG and IL10; the interaction is mediated by ITGAL. The sequence is that of Ubiquitin-like protein ISG15 from Homo sapiens (Human).